Reading from the N-terminus, the 379-residue chain is uncharacterized protein (379 aa).

Disordered regions lie at residues 1 to 20, 227 to 290, and 331 to 371; these read MLPQNSQVVHGVQDGPPVGP, VSQR…LQGH, and PGCA…RAGH. Residues 7–20 are compositionally biased toward low complexity; that stretch reads QVVHGVQDGPPVGP. Residues 249–261 show a composition bias toward basic and acidic residues; the sequence is GCKDPRVRKEPGR.

This is an uncharacterized protein from Dryophytes versicolor (chameleon treefrog).